Consider the following 87-residue polypeptide: Serine rich endogenous peptide 17 (87 aa).

An N-terminal signal peptide occupies residues 1 to 28; the sequence is MTGKAPFFVILIAALLLLSSFFFGEVKA. The tract at residues 32–87 is disordered; it reads KQPKHRKLGNREGDENRSNEIVVQMKARVKRSKSKRGPQKKEPYKKPPCSPPTHPA. The segment covering 40–49 has biased composition (basic and acidic residues); that stretch reads GNREGDENRS. Positions 51–71 match the SCOOP motif motif; it reads EIVVQMKARVKRSKSKRGPQK. The segment covering 58 to 69 has biased composition (basic residues); the sequence is ARVKRSKSKRGP. The SxS motif essential for MIK2 binding motif lies at 63–65; that stretch reads SKS. Positions 77 to 87 are enriched in pro residues; that stretch reads KPPCSPPTHPA.

Belongs to the serine rich endogenous peptide (SCOOP) phytocytokine family. Interacts with MIK2 (via extracellular leucine-rich repeat domain); this interaction triggers the formation of complex between MIK2 and the BAK1/SERK3 and SERK4 coreceptors, and subsequent BAK1 activation by phosphorylation.

It localises to the cell membrane. The protein resides in the secreted. The protein localises to the extracellular space. It is found in the apoplast. In terms of biological role, brassicaceae-specific phytocytokine (plant endogenous peptide released into the apoplast) perceived by MIK2 in a BAK1/SERK3 and SERK4 coreceptors-dependent manner, that modulates various physiological and antimicrobial processes including growth prevention and reactive oxygen species (ROS) response regulation. This chain is Serine rich endogenous peptide 17, found in Arabidopsis thaliana (Mouse-ear cress).